Reading from the N-terminus, the 465-residue chain is Anthocyanidin 3-O-glucosyltransferase 2 (465 aa).

H22 (proton acceptor) is an active-site residue. Residues H22 and Q87 each contribute to the an anthocyanidin site. The active-site Charge relay is D122. T145 is a UDP-alpha-D-glucose binding site. H154 lines the an anthocyanidin pocket. Residues A345, Q347, H362, W365, N366, S367, and E370 each contribute to the UDP-alpha-D-glucose site. Position 385 (G385) interacts with an anthocyanidin. UDP-alpha-D-glucose-binding residues include D386 and Q387.

The protein belongs to the UDP-glycosyltransferase family. Highest expression detected in fruit, with very low levels detected in petal and leaf.

The enzyme catalyses an anthocyanidin + UDP-alpha-D-glucose + H(+) = an anthocyanidin 3-O-beta-D-glucoside + UDP. The catalysed reaction is pelargonidin + UDP-alpha-D-glucose = pelargonidin 3-O-beta-D-glucoside + UDP. It carries out the reaction cyanidin + UDP-alpha-D-glucose = cyanidin 3-O-beta-D-glucoside + UDP + H(+). It functions in the pathway pigment biosynthesis; anthocyanin biosynthesis. In the presence of other necessary color factors, this glycosylation reaction allows the accumulation of anthocyanin pigments. Anthocyanidins are the preferred substrates, while flavonols are only a minor substrate in vitro. The chain is Anthocyanidin 3-O-glucosyltransferase 2 from Fragaria ananassa (Strawberry).